The following is a 637-amino-acid chain: DNA gyrase subunit B (637 aa).

One can recognise a Toprim domain in the interval 421-535 (SEIYIVEGDS…HGYVYIAQPP (115 aa)). Mg(2+) is bound by residues glutamate 427, aspartate 500, and aspartate 502.

Belongs to the type II topoisomerase GyrB family. In terms of assembly, heterotetramer, composed of two GyrA and two GyrB chains. In the heterotetramer, GyrA contains the active site tyrosine that forms a transient covalent intermediate with DNA, while GyrB binds cofactors and catalyzes ATP hydrolysis. It depends on Mg(2+) as a cofactor. The cofactor is Mn(2+). Ca(2+) is required as a cofactor.

It localises to the cytoplasm. It carries out the reaction ATP-dependent breakage, passage and rejoining of double-stranded DNA.. Functionally, a type II topoisomerase that negatively supercoils closed circular double-stranded (ds) DNA in an ATP-dependent manner to modulate DNA topology and maintain chromosomes in an underwound state. Negative supercoiling favors strand separation, and DNA replication, transcription, recombination and repair, all of which involve strand separation. Also able to catalyze the interconversion of other topological isomers of dsDNA rings, including catenanes and knotted rings. Type II topoisomerases break and join 2 DNA strands simultaneously in an ATP-dependent manner. The chain is DNA gyrase subunit B from Halalkalibacterium halodurans (strain ATCC BAA-125 / DSM 18197 / FERM 7344 / JCM 9153 / C-125) (Bacillus halodurans).